We begin with the raw amino-acid sequence, 210 residues long: Interleukin-6 (210 aa).

The signal sequence occupies residues 1–25; it reads MNSLSTSAFSPVAFSLGLLLVMATA. A disulfide bond links C72 and C78. The residue at position 81 (S81) is a Phosphoserine. C101 and C111 are oxidised to a cystine.

It belongs to the IL-6 superfamily. Component of a hexamer of two molecules each of IL6, IL6R and IL6ST; first binds to IL6R to associate with the signaling subunit IL6ST. Interacts with IL6R (via the N-terminal ectodomain); this interaction may be affected by IL6R-binding with SORL1, hence decreasing IL6 cis signaling. Interacts with SORL1 (via the N-terminal ectodomain); this interaction leads to IL6 internalization and lysosomal degradation. May form a trimeric complex with the soluble SORL1 ectodomain and soluble IL6R receptor; this interaction might stabilize circulating IL6, hence promoting IL6 trans signaling.

The protein localises to the secreted. In terms of biological role, cytokine with a wide variety of biological functions in immunity, tissue regeneration, and metabolism. Binds to IL6R, then the complex associates to the signaling subunit IL6ST/gp130 to trigger the intracellular IL6-signaling pathway. The interaction with the membrane-bound IL6R and IL6ST stimulates 'classic signaling', whereas the binding of IL6 and soluble IL6R to IL6ST stimulates 'trans-signaling'. Alternatively, 'cluster signaling' occurs when membrane-bound IL6:IL6R complexes on transmitter cells activate IL6ST receptors on neighboring receiver cells. Its function is as follows. IL6 is a potent inducer of the acute phase response. Rapid production of IL6 contributes to host defense during infection and tissue injury, but excessive IL6 synthesis is involved in disease pathology. In the innate immune response, is synthesized by myeloid cells, such as macrophages and dendritic cells, upon recognition of pathogens through toll-like receptors (TLRs) at the site of infection or tissue injury. In the adaptive immune response, is required for the differentiation of B cells into immunoglobulin-secreting cells. Plays a major role in the differentiation of CD4(+) T cell subsets. Essential factor for the development of T follicular helper (Tfh) cells that are required for the induction of germinal-center formation. Required to drive naive CD4(+) T cells to the Th17 lineage. Also required for proliferation of myeloma cells and the survival of plasmablast cells. Functionally, acts as an essential factor in bone homeostasis and on vessels directly or indirectly by induction of VEGF, resulting in increased angiogenesis activity and vascular permeability. Induces, through 'trans-signaling' and synergistically with IL1B and TNF, the production of VEGF. Involved in metabolic controls, is discharged into the bloodstream after muscle contraction increasing lipolysis and improving insulin resistance. 'Trans-signaling' in central nervous system also regulates energy and glucose homeostasis. Mediates, through GLP-1, crosstalk between insulin-sensitive tissues, intestinal L cells and pancreatic islets to adapt to changes in insulin demand. Also acts as a myokine. Plays a protective role during liver injury, being required for maintenance of tissue regeneration. Also has a pivotal role in iron metabolism by regulating HAMP/hepcidin expression upon inflammation or bacterial infection. Through activation of IL6ST-YAP-NOTCH pathway, induces inflammation-induced epithelial regeneration. The polypeptide is Interleukin-6 (IL6) (Mustela putorius furo (European domestic ferret)).